A 474-amino-acid polypeptide reads, in one-letter code: Hepatocyte nuclear factor 4-alpha (474 aa).

The segment at residues 57–132 is a DNA-binding region (nuclear receptor); that stretch reads SALCAICGDR…AGMKKEAVQN (76 aa). 2 NR C4-type zinc fingers span residues 60–80 and 96–120; these read CAIC…CDGC and CRFS…LKKC. Residues serine 142 and serine 143 each carry the phosphoserine; by PKA modification. The residue at position 144 (tyrosine 144) is a Phosphotyrosine. An NR LBD domain is found at 147–377; it reads SSLPSINALL…NLLQEMLLGG (231 aa). Threonine 166 carries the phosphothreonine modification. Phosphoserine is present on serine 167. Residues lysine 234 and lysine 307 each participate in a glycyl lysine isopeptide (Lys-Gly) (interchain with G-Cter in ubiquitin) cross-link. Phosphoserine; by AMPK is present on serine 313. The short motif at 368–376 is the 9aaTAD element; it reads NLLQEMLLG. Residues 413-450 form a disordered region; that stretch reads SNGQMCEWPRPRGQAATPETPQPSPPSGSGSESYKLLP. Residues threonine 429 and threonine 432 each carry the phosphothreonine modification. Position 436 is a phosphoserine (serine 436). Residue lysine 458 is modified to N6-acetyllysine.

It belongs to the nuclear hormone receptor family. NR2 subfamily. As to quaternary structure, homodimerization is required for HNF4-alpha to bind to its recognition site. Interacts with CLOCK, BMAL1, CRY1, CRY2, PER1 and PER2. Interacts with NR0B2/SHP; the resulting heterodimer is transcriptionally inactive. Interacts with DDX3X; this interaction disrupts the interaction between HNF4 and NR0B2 that forms inactive heterodimers and enhances the formation of active HNF4 homodimers. Phosphorylation at Ser-313 by AMPK reduces the ability to form homodimers and bind DNA. Phosphorylated in the recognition sequence R-R-S-S near the DNA-binding domain; phosphorylation results in decrease in DNA-binding activity. Phosphorylation of HNF4 depends on the diet and is decreased by a carbohydrate-rich diet and is increased by fasting. In terms of processing, the N-terminus is blocked. Post-translationally, acetylation at Lys-458 lowers transcriptional activation by about two-fold. In terms of tissue distribution, liver, kidney and intestine.

The protein resides in the nucleus. Functionally, transcriptional regulator which controls the expression of hepatic genes during the transition of endodermal cells to hepatic progenitor cells, facilitating the recruitment of RNA pol II to the promoters of target genes. Activates the transcription of CYP2C38. Represses the CLOCK-BMAL1 transcriptional activity and is essential for circadian rhythm maintenance and period regulation in the liver and colon cells. The polypeptide is Hepatocyte nuclear factor 4-alpha (Hnf4a) (Rattus norvegicus (Rat)).